We begin with the raw amino-acid sequence, 816 residues long: Transcription factor qa-1f (816 aa).

A DNA-binding region (zn(2)-C6 fungal-type) is located at residues 76 to 103 (CDQCRAAREKCDGIQPACFPCVSQGRSC). A compositionally biased stretch (polar residues) spans 184-202 (SGQAAQDPSEDGQSPSEDI). The segment at 184 to 235 (SGQAAQDPSEDGQSPSEDINVQDAGAKTSDFPHAPHLTFSAPKSSTAETRTL) is disordered.

It is found in the nucleus. Functionally, transcription activator; part of the qa gene cluster that mediates the catabolism of quinic acid (QA) and as such, allows the use of QA as a sole carbon source. Activates the expression of qa cluster genes by binding to a 16 base-pair consensus sequence 5'-GGRTAARYRYTTAYCC-3' present in the promoters of the target genes. Regulates its own expression. May regulate the expression of many other genes inclusing genes with products in 8 mutually connected metabolic pathways: (1) starch and sucrose metabolism; (2) glycolysis/glucanogenesis; (3) TCA Cycle; (4) butanoate metabolism; (5) pyruvate metabolism; (6) aromatic amino acid and QA metabolism; (7) valine, leucine, and isoleucine degradation; and (8) transport of sugars and amino acids. In Neurospora crassa (strain ATCC 24698 / 74-OR23-1A / CBS 708.71 / DSM 1257 / FGSC 987), this protein is Transcription factor qa-1f.